We begin with the raw amino-acid sequence, 607 residues long: ATP-dependent DNA helicase II subunit 1 (607 aa).

The Ku domain maps to 241–452; sequence MDLGNDVRIG…IETMQRILRG (212 aa). The SAP domain occupies 570 to 604; that stretch reads IKALKVSQLKDILRDRGLRVSGKKADLLDNLTNYV.

Belongs to the ku70 family. As to quaternary structure, heterodimer of pku70 and pku80.

It localises to the nucleus. The protein resides in the chromosome. The protein localises to the telomere. It carries out the reaction ATP + H2O = ADP + phosphate + H(+). Single-stranded DNA-dependent ATP-dependent helicase. Involved in non-homologous end joining (NHEJ) DNA double strand break repair. DNA-binding is sequence-independent but has a high affinity to nicks in double-stranded DNA and to the ends of duplex DNA. Binds to naturally occurring chromosomal ends, and therefore provides chromosomal end protection. Required also for telomere recombination to repair telomeric ends in the absence of telomerase. ku70, of the ku70/ku80 heterodimer, binds to the stem loop of tlc1, the RNA component of telomerase. Required for mating-type switching. Involved in telomere maintenance. Interacts with telomeric repeats and subtelomeric sequences thereby controlling telomere length and protecting against subtelomeric rearrangement. Maintains telomeric chromatin, which is involved in silencing the expression of genes located at the telomere. This chain is ATP-dependent DNA helicase II subunit 1 (pku70), found in Schizosaccharomyces pombe (strain 972 / ATCC 24843) (Fission yeast).